The following is a 199-amino-acid chain: Recombination protein RecR (199 aa).

The C4-type zinc-finger motif lies at C58–C73. The Toprim domain maps to A81–P176.

The protein belongs to the RecR family.

In terms of biological role, may play a role in DNA repair. It seems to be involved in an RecBC-independent recombinational process of DNA repair. It may act with RecF and RecO. The protein is Recombination protein RecR of Bradyrhizobium sp. (strain BTAi1 / ATCC BAA-1182).